Reading from the N-terminus, the 423-residue chain is Limonoid 21-O-acetyltransferse (423 aa).

Active-site proton acceptor residues include H152 and D362.

Belongs to the plant acyltransferase family. As to quaternary structure, monomer. As to expression, mainly expressed in petioles.

The enzyme catalyses isomeliandiol + acetyl-CoA = 21-O-acetyl-isomeliandiol + CoA. It functions in the pathway secondary metabolite biosynthesis; terpenoid biosynthesis. Acetyltransferase involved in the biosynthesis of limonoids triterpene natural products such as azadirachtin, an antifeedant widely used as bioinsecticide, and possessing many medicinal applications including anti-tumoral, anti-malarial, anti-rheumatic, antibacterial, anti-inflammatory, anti-pyretic and diuretic effects. Catalyzes the formation of 21-O-acetyl-isomeliandiol from isomeliandiol. This chain is Limonoid 21-O-acetyltransferse, found in Melia azedarach (Chinaberry tree).